A 113-amino-acid chain; its full sequence is U11-theraphotoxin-Hhn1a (113 aa).

The signal sequence occupies residues 1–21; sequence MNTVRVTFLLVFVLAVSLGQA. The propeptide occupies 22-74; it reads DKDENRMEMQGKTEQGKSYLDFAENLLLQKLEELEAKLLEEDSEESRNSRQKR. 3 disulfides stabilise this stretch: C75–C90, C82–C95, and C89–C110.

It belongs to the neurotoxin 14 (magi-1) family. 01 (HNTX-16) subfamily. In terms of tissue distribution, expressed by the venom gland.

The protein localises to the secreted. In terms of biological role, probable ion channel inhibitor. The chain is U11-theraphotoxin-Hhn1a from Cyriopagopus hainanus (Chinese bird spider).